Reading from the N-terminus, the 156-residue chain is Large ribosomal subunit protein uL23 (156 aa).

Positions 1–19 (MAPKAKKEAPAPPKAEAKA) are enriched in basic and acidic residues. A disordered region spans residues 1–67 (MAPKAKKEAP…PKYPRKSAPR (67 aa)). Alanine 2 bears the N,N,N-trimethylalanine mark. A Glycyl lysine isopeptide (Lys-Gly) (interchain with G-Cter in SUMO2) cross-link involves residue lysine 14. Positions 20–67 (KALKAKKAVLKGVHSHKKKKIRTSPTFRRPKTLRLRRQPKYPRKSAPR) are enriched in basic residues. The segment at 32-74 (VHSHKKKKIRTSPTFRRPKTLRLRRQPKYPRKSAPRRNKLDHY) is beta-like import receptor binding (BIB) domain. Position 41 is a citrulline (arginine 41). Phosphoserine is present on serine 43. Residue threonine 45 is modified to Phosphothreonine. The residue at position 70 (lysine 70) is an N6-acetyllysine.

This sequence belongs to the universal ribosomal protein uL23 family. In terms of assembly, component of the large ribosomal subunit. Interacts with LYAR and GNL2. Interacts with MDM2; this interaction may promote MDM2-mediated p53/TP53 polyubiquitination. Directly interacts (via BIB domain) with IPO5, IPO7, KPNB1 and TNPO1; these interactions are involved in RPL23A nuclear import for the assembly of ribosomal subunits. Interacts with IPO8. N-terminus is methylated by METTL11A/NTM1. Post-translationally, citrullinated by PADI4.

It is found in the cytoplasm. The protein resides in the nucleus. In terms of biological role, component of the large ribosomal subunit. The ribosome is a large ribonucleoprotein complex responsible for the synthesis of proteins in the cell. Binds a specific region on the 26S rRNA. May promote p53/TP53 degradation possibly through the stimulation of MDM2-mediated TP53 polyubiquitination. This is Large ribosomal subunit protein uL23 (RPL23A) from Bos taurus (Bovine).